The sequence spans 198 residues: Segregation and condensation protein B (198 aa).

The disordered stretch occupies residues 168-198 (KLADPATDEPDQNEMDLFFDRFNQSKEQEEE).

The protein belongs to the ScpB family. Homodimer. Homodimerization may be required to stabilize the binding of ScpA to the Smc head domains. Component of a cohesin-like complex composed of ScpA, ScpB and the Smc homodimer, in which ScpA and ScpB bind to the head domain of Smc. The presence of the three proteins is required for the association of the complex with DNA.

It localises to the cytoplasm. Participates in chromosomal partition during cell division. May act via the formation of a condensin-like complex containing Smc and ScpA that pull DNA away from mid-cell into both cell halves. The protein is Segregation and condensation protein B of Listeria monocytogenes serotype 4b (strain CLIP80459).